Consider the following 122-residue polypeptide: Large ribosomal subunit protein uL14c (122 aa).

Belongs to the universal ribosomal protein uL14 family. As to quaternary structure, part of the 50S ribosomal subunit.

The protein resides in the plastid. The protein localises to the chloroplast. Binds to 23S rRNA. The chain is Large ribosomal subunit protein uL14c from Manihot esculenta (Cassava).